Consider the following 420-residue polypeptide: CinA-like protein (420 aa).

It belongs to the CinA family.

The protein is CinA-like protein of Geotalea uraniireducens (strain Rf4) (Geobacter uraniireducens).